Here is a 106-residue protein sequence, read N- to C-terminus: Nucleoid-associated protein Nham_0463 (106 aa).

Belongs to the YbaB/EbfC family. Homodimer.

The protein resides in the cytoplasm. It localises to the nucleoid. In terms of biological role, binds to DNA and alters its conformation. May be involved in regulation of gene expression, nucleoid organization and DNA protection. The chain is Nucleoid-associated protein Nham_0463 from Nitrobacter hamburgensis (strain DSM 10229 / NCIMB 13809 / X14).